Reading from the N-terminus, the 640-residue chain is Telomere repeat-binding protein 4 (640 aa).

Residues 343–422 form the Ubiquitin-like domain; the sequence is VKFSIKSLRI…LGNLGFTLEP (80 aa). The interval 442–464 is disordered; that stretch reads TDSTKLSERSAASPALETGIPLP. In terms of domain architecture, HTH myb-type spans 530-589; it reads SQRRTRRPFSVTEVEALVSAVEEVGTGRWRDVKLRSFENASHRTYVDLKDKWKTLVHTAS. A DNA-binding region (H-T-H motif) is located at residues 558-585; the sequence is WRDVKLRSFENASHRTYVDLKDKWKTLV.

As to quaternary structure, homomultimer. Interacts with SNL1 (via PAH2). Interacts with STO. Expressed ubiquitously. Highest expression in flowers and roots.

The protein resides in the nucleus. Functionally, binds specifically to the plant telomeric double-stranded DNA sequences 5'-TTTAGGG-3'. At least 2 repeats of telomeric sequences are required for binding. Induces DNA bending. In Arabidopsis thaliana (Mouse-ear cress), this protein is Telomere repeat-binding protein 4 (TRP4).